The following is a 200-amino-acid chain: Pyrrolidone-carboxylate peptidase (200 aa).

Catalysis depends on residues Glu-79, Cys-142, and His-166.

The protein belongs to the peptidase C15 family. In terms of assembly, homotetramer.

The protein resides in the cytoplasm. It carries out the reaction Release of an N-terminal pyroglutamyl group from a polypeptide, the second amino acid generally not being Pro.. Functionally, removes 5-oxoproline from various penultimate amino acid residues except L-proline. This chain is Pyrrolidone-carboxylate peptidase (pcp), found in Pyrococcus abyssi (strain GE5 / Orsay).